The chain runs to 603 residues: Probable HECT-type ubiquitin ligase-interacting protein creD (603 aa).

Disordered stretches follow at residues 375-398 and 432-499; these read ELDPNGYRTPGPGSGPGTPFGTLS and LNIT…MATP. A compositionally biased stretch (basic and acidic residues) spans 443–455; the sequence is TDHESQNDSEHRR. The segment covering 465 to 481 has biased composition (low complexity); it reads PSSGSNSHSPSSPVLSR. The span at 482-492 shows a compositional bias: basic and acidic residues; the sequence is RPSDEVDHEHV.

The protein belongs to the arrestin family. Interacts with hulA.

Component of the regulatory network controlling carbon source utilization through ubiquitination and deubiquitination involving creA, creB, creC, creD and acrB. May be involved in signaling by recognizing appropriately phosphorylated substrates via its arrestin domains and then recruit a HECT-type ubiquitin ligase such as hulA, leading to ubiquitination of the substrate, providing a link between ubiquitination and phosphorylation in protein regulation and stability. This Aspergillus flavus (strain ATCC 200026 / FGSC A1120 / IAM 13836 / NRRL 3357 / JCM 12722 / SRRC 167) protein is Probable HECT-type ubiquitin ligase-interacting protein creD (creD).